The primary structure comprises 128 residues: Glycine cleavage system H protein (128 aa).

Positions 23–105 (VATVGISDHA…YEGGWLFKVQ (83 aa)) constitute a Lipoyl-binding domain. N6-lipoyllysine is present on Lys-64.

This sequence belongs to the GcvH family. The glycine cleavage system is composed of four proteins: P, T, L and H. It depends on (R)-lipoate as a cofactor.

Its function is as follows. The glycine cleavage system catalyzes the degradation of glycine. The H protein shuttles the methylamine group of glycine from the P protein to the T protein. In Alcanivorax borkumensis (strain ATCC 700651 / DSM 11573 / NCIMB 13689 / SK2), this protein is Glycine cleavage system H protein.